The chain runs to 350 residues: Glycerol-3-phosphate dehydrogenase [NAD(+)], cytoplasmic (350 aa).

NAD(+)-binding positions include 11–16, F98, K121, and A155; that span reads GSGNWG. Residue K121 participates in substrate binding. Residue K206 is the Proton acceptor of the active site. NAD(+) is bound by residues R270 and Q299. 270–271 contacts substrate; it reads RN.

Belongs to the NAD-dependent glycerol-3-phosphate dehydrogenase family. Homodimer.

It localises to the cytoplasm. The catalysed reaction is sn-glycerol 3-phosphate + NAD(+) = dihydroxyacetone phosphate + NADH + H(+). The protein operates within phospholipid metabolism; alpha-glycerophosphate cycle. The chain is Glycerol-3-phosphate dehydrogenase [NAD(+)], cytoplasmic (Gpdh1) from Drosophila ezoana (Fruit fly).